Reading from the N-terminus, the 366-residue chain is Isocitrate dehydrogenase [NAD] subunit alpha, mitochondrial (366 aa).

The transit peptide at 1–27 directs the protein to the mitochondrion; the sequence is MAGPAWISKVSRLLGAFHNQKQVTRGF. At lysine 77 the chain carries N6-succinyllysine. Threonine 101 bears the Phosphothreonine mark. Substrate contacts are provided by arginine 115, arginine 125, and arginine 146. Residue lysine 223 is modified to N6-acetyllysine. Mg(2+) contacts are provided by aspartate 233, aspartate 257, and aspartate 261. Position 343 is an N6-acetyllysine; alternate (lysine 343). Lysine 343 is modified (N6-succinyllysine; alternate). At lysine 350 the chain carries N6-succinyllysine.

It belongs to the isocitrate and isopropylmalate dehydrogenases family. As to quaternary structure, heterooligomer of subunits alpha (IDH3A), beta (IDH3B), and gamma (IDH3G) in the apparent ratio of 2:1:1. The heterodimer containing one IDH3A and one IDH3B subunit and the heterodimer containing one IDH3A and one IDH3G subunit assemble into a heterotetramer (which contains two subunits of IDH3A, one of IDH3B and one of IDH3G) and further into the heterooctamer. The cofactor is Mg(2+). Mn(2+) is required as a cofactor.

It is found in the mitochondrion. It carries out the reaction D-threo-isocitrate + NAD(+) = 2-oxoglutarate + CO2 + NADH. Its activity is regulated as follows. The heterotetramer and the heterodimer composed of IDH3A and IDH3G subunits can be allosterically activated by citrate (CIT) or/and ADP, and the two activators can act independently or synergistically. The heterodimer composed of IDH3A and IDH3B subunits cannot be allosterically regulated and the allosteric regulation of the heterotetramer is through the IDH3G subunit and not the IDH3B subunit. The IDH3G subunit contains the allosteric site which consists of a CIT-binding site and an ADP-binding site, and the binding of CIT and ADP causes conformational changes at the allosteric site which are transmitted to the active site in the catalytic subunit (IDH3A) through a cascade of conformational changes at the heterodimer interface, leading to stabilization of the isocitrate-binding at the active site and thus activation of the enzyme. ATP can activate the heterotetramer and the heterodimer composed of IDH3A and IDH3G subunits at low concentrations but inhibits their activities at high concentrations, whereas ATP exhibits only inhibitory effect on the heterodimer composed of IDH3A and IDH3B subunits. Functionally, catalytic subunit of the enzyme which catalyzes the decarboxylation of isocitrate (ICT) into alpha-ketoglutarate. The heterodimer composed of the alpha (IDH3A) and beta (IDH3B) subunits and the heterodimer composed of the alpha (IDH3A) and gamma (IDH3G) subunits, have considerable basal activity but the full activity of the heterotetramer (containing two subunits of IDH3A, one of IDH3B and one of IDH3G) requires the assembly and cooperative function of both heterodimers. This chain is Isocitrate dehydrogenase [NAD] subunit alpha, mitochondrial (IDH3A), found in Sus scrofa (Pig).